The primary structure comprises 626 residues: MNDDSQDKIIHDIRIQLRKAATELSRWKLYGSSKWAAEALAGLAEAIDVDQTHSLADESPLRNKQGVPKQMFEIPQNGFGLSETEYDLYLLGSTLFDAKEFDRCVFFLKDVTNPYLKFLKLYSKFLSWDKKSQESMENILTTGKFTDEMYRANKDGDGSGNEDINQSGHQRANLKMVSNEHESQSNISSILKEINTFLESYEIKIDDDEADLGLALLYYLRGVILKQEKNISKAMSSFLKSLSCYSFNWSCWLELMDCLQKVDDALLLNNYLYQNFQFKFSENLGSQRTIEFNIMIKFFKLKVFEELNGQLEDYFEDLEFLLQVFPNFTFLKAYNATISYNNLDYVTAESRFDDIVKQDPYRLNDLETYSNILYVMQKNSKLAYLAQFVSQIDRFRPETCCIIANYYSARQEHEKSIMYFRRALTLDKKTTNAWTLMGHEFVELSNSHAAIECYRRAVDICPRDFKAWFGLGQAYALLDMHLYSLYYFQKACTLKPWDRRIWQVLGECYSKTGNKVEAIKCYKRSIKASQTVDQNTSIYYRLAQLYEELEDLQECKKFMMKCVDVEELLEGIVTDETVKARLWLAIFEIKAGNYQLAYDYAMGVSSGTSQEIEEARMLARECRRHM.

At Ser59 the chain carries Phosphoserine; by CDC28. TPR repeat units lie at residues 215–248, 295–328, 329–362, 363–396, 397–430, 431–464, 465–498, 499–532, and 536–569; these read ALLY…YSFN, MIKF…FPNF, TFLK…DPYR, LNDL…DRFR, PETC…DKKT, TNAW…CPRD, FKAW…KPWD, RRIW…SQTV, and TSIY…EELL.

This sequence belongs to the APC8/CDC23 family. The APC/C is composed of at least 13 subunits that stay tightly associated throughout the cell cycle: APC1, APC2, APC4, APC5, APC9, APC11, CDC16, CDC23, CDC26, CDC27, DOC1, MND2 and SWM1. CDC23 interacts directly with SWM1 and binds the destruction box (D-box) of the substrate cyclin CLB2. Post-translationally, phosphorylated by CDC28, which is required for the early mitotic activity of the APC/C in its CDC20-bound form.

It localises to the nucleus. It is found in the chromosome. The protein localises to the centromere. Its subcellular location is the kinetochore. It participates in protein modification; protein ubiquitination. Its function is as follows. Component of the anaphase promoting complex/cyclosome (APC/C), a cell cycle-regulated E3 ubiquitin-protein ligase complex that controls progression through mitosis and the G1 phase of the cell cycle. The APC/C is thought to confer substrate specificity and, in the presence of ubiquitin-conjugating E2 enzymes, it catalyzes the formation of protein-ubiquitin conjugates that are subsequently degraded by the 26S proteasome. In early mitosis, the APC/C is activated by CDC20 and targets securin PDS1, the B-type cyclin CLB5, and other anaphase inhibitory proteins for proteolysis, thereby triggering the separation of sister chromatids at the metaphase-to-anaphase transition. In late mitosis and in G1, degradation of CLB5 allows activation of the APC/C by CDH1, which is needed to destroy CDC20 and the B-type cyclin CLB2 to allow exit from mitosis and creating the low CDK state necessary for cytokinesis and for reforming prereplicative complexes in G1 prior to another round of replication. The protein is Anaphase-promoting complex subunit CDC23 (CDC23) of Saccharomyces cerevisiae (strain ATCC 204508 / S288c) (Baker's yeast).